The primary structure comprises 386 residues: Probable serine/threonine-protein kinase PBL23 (386 aa).

A lipid anchor (S-palmitoyl cysteine) is attached at Cys5. In terms of domain architecture, Protein kinase spans 82–360; the sequence is FNPDNQLGEG…SDVVTALEYL (279 aa). ATP contacts are provided by residues 88 to 96 and Lys111; that span reads LGEGGFGRV. The active-site Proton acceptor is the Asp210. A disordered region spans residues 365-386; that stretch reads TEEDGQTVEGEEEEEEDERSKL. The segment covering 368-386 has biased composition (acidic residues); the sequence is DGQTVEGEEEEEEDERSKL.

The protein belongs to the protein kinase superfamily. Ser/Thr protein kinase family.

The protein resides in the cell membrane. The catalysed reaction is L-seryl-[protein] + ATP = O-phospho-L-seryl-[protein] + ADP + H(+). The enzyme catalyses L-threonyl-[protein] + ATP = O-phospho-L-threonyl-[protein] + ADP + H(+). Functionally, may be involved in plant defense signaling. This chain is Probable serine/threonine-protein kinase PBL23, found in Arabidopsis thaliana (Mouse-ear cress).